A 250-amino-acid chain; its full sequence is Probable transcriptional regulatory protein Paes_0496 (250 aa).

Belongs to the TACO1 family.

It is found in the cytoplasm. This Prosthecochloris aestuarii (strain DSM 271 / SK 413) protein is Probable transcriptional regulatory protein Paes_0496.